A 339-amino-acid polypeptide reads, in one-letter code: DNA-directed RNA polymerase subunit alpha (339 aa).

Residues 1–235 (MTIQKNWQEL…DQLNVFVNFE (235 aa)) form an alpha N-terminal domain (alpha-NTD) region. Residues 251 to 339 (FNPAFLKKVD…ELAKRFEDHY (89 aa)) are alpha C-terminal domain (alpha-CTD).

The protein belongs to the RNA polymerase alpha chain family. As to quaternary structure, homodimer. The RNAP catalytic core consists of 2 alpha, 1 beta, 1 beta' and 1 omega subunit. When a sigma factor is associated with the core the holoenzyme is formed, which can initiate transcription.

The catalysed reaction is RNA(n) + a ribonucleoside 5'-triphosphate = RNA(n+1) + diphosphate. Functionally, DNA-dependent RNA polymerase catalyzes the transcription of DNA into RNA using the four ribonucleoside triphosphates as substrates. The polypeptide is DNA-directed RNA polymerase subunit alpha (Afipia carboxidovorans (strain ATCC 49405 / DSM 1227 / KCTC 32145 / OM5) (Oligotropha carboxidovorans)).